Here is a 315-residue protein sequence, read N- to C-terminus: 4-hydroxy-3-methylbut-2-enyl diphosphate reductase (315 aa).

Cys-12 lines the [4Fe-4S] cluster pocket. (2E)-4-hydroxy-3-methylbut-2-enyl diphosphate is bound by residues His-40 and His-74. Dimethylallyl diphosphate is bound by residues His-40 and His-74. 2 residues coordinate isopentenyl diphosphate: His-40 and His-74. A [4Fe-4S] cluster-binding site is contributed by Cys-96. Position 124 (His-124) interacts with (2E)-4-hydroxy-3-methylbut-2-enyl diphosphate. His-124 lines the dimethylallyl diphosphate pocket. His-124 serves as a coordination point for isopentenyl diphosphate. Catalysis depends on Glu-126, which acts as the Proton donor. Position 167 (Thr-167) interacts with (2E)-4-hydroxy-3-methylbut-2-enyl diphosphate. Cys-213 provides a ligand contact to [4Fe-4S] cluster. The (2E)-4-hydroxy-3-methylbut-2-enyl diphosphate site is built by Ser-241, Ser-242, Asn-243, and Ser-290. Residues Ser-241, Ser-242, Asn-243, and Ser-290 each coordinate dimethylallyl diphosphate. Isopentenyl diphosphate is bound by residues Ser-241, Ser-242, Asn-243, and Ser-290.

This sequence belongs to the IspH family. [4Fe-4S] cluster is required as a cofactor.

It carries out the reaction isopentenyl diphosphate + 2 oxidized [2Fe-2S]-[ferredoxin] + H2O = (2E)-4-hydroxy-3-methylbut-2-enyl diphosphate + 2 reduced [2Fe-2S]-[ferredoxin] + 2 H(+). The catalysed reaction is dimethylallyl diphosphate + 2 oxidized [2Fe-2S]-[ferredoxin] + H2O = (2E)-4-hydroxy-3-methylbut-2-enyl diphosphate + 2 reduced [2Fe-2S]-[ferredoxin] + 2 H(+). It participates in isoprenoid biosynthesis; dimethylallyl diphosphate biosynthesis; dimethylallyl diphosphate from (2E)-4-hydroxy-3-methylbutenyl diphosphate: step 1/1. The protein operates within isoprenoid biosynthesis; isopentenyl diphosphate biosynthesis via DXP pathway; isopentenyl diphosphate from 1-deoxy-D-xylulose 5-phosphate: step 6/6. In terms of biological role, catalyzes the conversion of 1-hydroxy-2-methyl-2-(E)-butenyl 4-diphosphate (HMBPP) into a mixture of isopentenyl diphosphate (IPP) and dimethylallyl diphosphate (DMAPP). Acts in the terminal step of the DOXP/MEP pathway for isoprenoid precursor biosynthesis. The sequence is that of 4-hydroxy-3-methylbut-2-enyl diphosphate reductase from Chloroherpeton thalassium (strain ATCC 35110 / GB-78).